A 341-amino-acid chain; its full sequence is MRSTKTIHVISCHAEGEVGDVIVGGVAPPPGETLWEQRSFIARDQTLRNFVLNEPRGGVFRHVNLLVPPRHPEADAAFIIMEPEDTPPMSGSNSICVSTVLLDGGIVPMIEPITEMVLEAPGGLVRVKAECRNGKAERIFVQNVTSFADKLSVPLDVEGIGTLTVDTAYGGDSFVVVDAEALGFAIVEDEAKDIARLGVRITNAANEQLGFSHPENPDWNHISFCAFCGPLSQTPTGLTGRSAVAIQPGKVDRSPTGTAVSARMALMAARGQMTIGDTFEAVSIIGSSFTGRIVSQQMAGDRPGIVPEISGRGWITGIHQHMLDPSDPWPGGYKLSDTWGA.

S90 functions as the Proton acceptor in the catalytic mechanism. Substrate-binding positions include 91 to 92, D252, and 257 to 258; these read GS and GT.

It belongs to the proline racemase family.

The catalysed reaction is trans-3-hydroxy-L-proline = 1-pyrroline-2-carboxylate + H2O. In terms of biological role, catalyzes the dehydration of trans-3-hydroxy-L-proline (t3LHyp) to Delta(1)-pyrroline-2-carboxylate (Pyr2C). May be involved in a degradation pathway of t3LHyp, which would allow L.aggregata to grow on t3LHyp as a sole carbon source. Displays neither proline racemase activity nor 4-hydroxyproline 2-epimerase activity. The chain is Trans-3-hydroxy-L-proline dehydratase from Roseibium aggregatum (strain ATCC 25650 / DSM 13394 / JCM 20685 / NBRC 16684 / NCIMB 2208 / IAM 12614 / B1) (Stappia aggregata).